Here is a 514-residue protein sequence, read N- to C-terminus: MNEPTRIPKYVKDKIRQAKQGDLYSSFTVSEYYYDGEVLERDIEQSELYLRNVSRIINNAKIRLRNISLYDYKKFSKLKFTSSEKNTTIIIGNNGSGKSTILESISKCLQFLSDNIRIQNNNNYKFQDSEINIHSISGQTIVRCILEIENDFSFSCSLTKNRENISRKVSSELEEFKALARMYQRSNELDNNTLSYPLLAYYPVERSVTLKRDDAVKYYERKKAKYSDKSEGLKNAFDGTSNFNDFFSWYKEIDDIINEFKANDSITKEEIEYLLSKTDNKEKIGSLISQLLEKKNNYNNNEDREFLIRQQKVIQESIKTFVSDIDQVKISRTPHLDMTVIKNGSEISIFNLSQGEKTLIALVSDIARRLVILNPSLENPLNGYGIVLIDEIDLHLHPKWQQTIVQKLENTFPNIQFILSTHSPLVLTTVTSEQIKIINELDYRFKLLSPTSNPFGKNASDALAIMETSESPLVHSEEILALIKKYESLVKRGQEDCRKTKEIKKTHRKHWIYI.

The ATP-binding motif lies at 92 to 99; the sequence is GNNGSGKS.

Its function is as follows. Probable ATPase component of antiviral defense system retron Vc95, composed of a non-coding RNA (ncRNA), a reverse transcriptase (RT), this protein and a putative HNH endonuclease. Expression of retron Vc95 confers protection against bacteriophages T2, T4 and T6. At multiplicity of infection (MOI) of 0.02 cultures slow growth when infected with T4 but do not collapse, at MOI 2 cultures enter growth stasis. This is Retron Vc95 probable ATPase from Vibrio cholerae serotype O1 biovar El Tor.